Here is a 189-residue protein sequence, read N- to C-terminus: GTP cyclohydrolase 1 (189 aa).

Positions 78, 81, and 150 each coordinate Zn(2+).

It belongs to the GTP cyclohydrolase I family. In terms of assembly, toroid-shaped homodecamer, composed of two pentamers of five dimers.

The enzyme catalyses GTP + H2O = 7,8-dihydroneopterin 3'-triphosphate + formate + H(+). It functions in the pathway cofactor biosynthesis; 7,8-dihydroneopterin triphosphate biosynthesis; 7,8-dihydroneopterin triphosphate from GTP: step 1/1. The sequence is that of GTP cyclohydrolase 1 from Bacillus pumilus (strain SAFR-032).